The sequence spans 279 residues: Tryptophan 2,3-dioxygenase (279 aa).

Residues F48–H52, Y110, and R114 each bind substrate. H237 contributes to the heme binding site. T251 provides a ligand contact to substrate.

This sequence belongs to the tryptophan 2,3-dioxygenase family. As to quaternary structure, homotetramer. Heme is required as a cofactor.

It carries out the reaction L-tryptophan + O2 = N-formyl-L-kynurenine. It participates in amino-acid degradation; L-tryptophan degradation via kynurenine pathway; L-kynurenine from L-tryptophan: step 1/2. In terms of biological role, heme-dependent dioxygenase that catalyzes the oxidative cleavage of the L-tryptophan (L-Trp) pyrrole ring and converts L-tryptophan to N-formyl-L-kynurenine. Catalyzes the oxidative cleavage of the indole moiety. In Ruegeria sp. (strain TM1040) (Silicibacter sp.), this protein is Tryptophan 2,3-dioxygenase.